We begin with the raw amino-acid sequence, 281 residues long: MIENRRGLTIFSHTMLILGIAVILFPLYVAFVAATLDDRAVFETPMTLLPGTQLLENIKTIWVNGVGVNSAPFWLMMLNSFIMAFSITVGKITVSMLSAFAIVWFRFPLRNLFFWMIFITLMLPVEVRIFPTVEVIANLKMLDSYAGLTLPLMASATATFLFRQFFMTLPDELVEAARIDGASPMRFFRDIVLPLSKTNLAALFVITFIYGWNQYLWPLLIITDVNLGTAVAGIKGMIATGEGTTQWNQVMAAMLLTLIPPVVIVLAMQRAFVRGLVDSEK.

6 helical membrane-spanning segments follow: residues 16–36 (LILG…AATL), 85–105 (FSIT…IVWF), 113–133 (FFWM…FPTV), 142–162 (LDSY…TFLF), 202–222 (ALFV…LLII), and 247–267 (WNQV…IVLA). The 192-residue stretch at 77-268 (MLNSFIMAFS…IPPVVIVLAM (192 aa)) folds into the ABC transmembrane type-1 domain.

Belongs to the binding-protein-dependent transport system permease family. UgpAE subfamily. The complex is composed of two ATP-binding proteins (UgpC), two transmembrane proteins (UgpA and UgpE) and a solute-binding protein (UgpB).

The protein localises to the cell inner membrane. Part of the ABC transporter complex UgpBAEC involved in sn-glycerol-3-phosphate (G3P) import. Probably responsible for the translocation of the substrate across the membrane. This Salmonella choleraesuis (strain SC-B67) protein is sn-glycerol-3-phosphate transport system permease protein UgpE (ugpE).